The sequence spans 498 residues: MHTHNNFKTPSDEDELDDLDEDMVVGVIAEIEQEVLNESDSDNDEYDLVEMGAPVPDNDGDSSYDGNESISSDDSFDPNAADSDSDDSMLDDAGDDASAGGATSSKRRKDDDNPSGSNRQSEATFDLDEDDETDETVRAMIAAIKKPRSAPPEIKLEDFITDICFHPDRDIIALATIIGDVHLYEYDNEANKLLRTIEVHSKACRDVEFTEDGRFLLTCSKDKCVMVTDMETEKLKKLYETAHDDAINTLHVLNENLFATGDDAGTVKLWDLRTKNAIFELKELEDQITQLTTNDQSKLLLATSADGYLTTFNIAARKMYVQSEPYEEELSCMGIYRGDSKLVVGTSKGRLYTYNWGQFGYHCDMYPGIKSPISLMIPITDRIACVAGEDGNIRACHIAPYRNLGVVGQHNMPIESLDVNSNGELIASSSHNNDVRFWNVKYFEDFGDIKYNEKHNAYKEQRHNLPSSKCSNASDFFADLTKEDADDDDAGAGPSNMA.

The tract at residues 1-133 (MHTHNNFKTP…TFDLDEDDET (133 aa)) is disordered. Composition is skewed to acidic residues over residues 12–23 (DEDELDDLDEDM), 31–48 (IEQEVLNESDSDNDEYDL), and 83–95 (SDSDDSMLDDAGD). Over residues 114–123 (PSGSNRQSEA) the composition is skewed to polar residues. 6 WD repeats span residues 155 to 194 (KLEDFITDICFHPDRDIIALATIIGDVHLYEYDNEANKLL), 199 to 238 (VHSKACRDVEFTEDGRFLLTCSKDKCVMVTDMETEKLKKL), 242 to 280 (AHDDAINTLHVLNENLFATGDDAGTVKLWDLRTKNAIFE), 283 to 322 (ELEDQITQLTTNDQSKLLLATSADGYLTTFNIAARKMYVQ), 325 to 364 (PYEEELSCMGIYRGDSKLVVGTSKGRLYTYNWGQFGYHCD), and 409 to 448 (QHNMPIESLDVNSNGELIASSSHNNDVRFWNVKYFEDFGD).

The protein belongs to the WD repeat WDR55 family.

This chain is WD repeat-containing protein 55 homolog, found in Drosophila erecta (Fruit fly).